The primary structure comprises 267 residues: Phosphate import ATP-binding protein PstB 2 (267 aa).

One can recognise an ABC transporter domain in the interval 21-262 (LSTKDVHVYY…AKLQSTNDYV (242 aa)). An ATP-binding site is contributed by 53-60 (GPSGSGKS).

This sequence belongs to the ABC transporter superfamily. Phosphate importer (TC 3.A.1.7) family. As to quaternary structure, the complex is composed of two ATP-binding proteins (PstB), two transmembrane proteins (PstC and PstA) and a solute-binding protein (PstS).

It localises to the cell membrane. It carries out the reaction phosphate(out) + ATP + H2O = ADP + 2 phosphate(in) + H(+). Part of the ABC transporter complex PstSACB involved in phosphate import. Responsible for energy coupling to the transport system. The protein is Phosphate import ATP-binding protein PstB 2 of Streptococcus pneumoniae (strain ATCC BAA-255 / R6).